Consider the following 273-residue polypeptide: N-alpha-acetyltransferase 30 (273 aa).

Disordered regions lie at residues Met-1 to Asn-39 and Gln-62 to Leu-85. The N-acetyltransferase domain maps to Arg-125–Arg-273.

Belongs to the acetyltransferase family. MAK3 subfamily. Component of the N-terminal acetyltransferase C (NatC) complex.

The protein resides in the cytoplasm. Its subcellular location is the nucleus. It catalyses the reaction N-terminal L-methionyl-L-leucyl-[protein] + acetyl-CoA = N-terminal N(alpha)-acetyl-L-methionyl-L-leucyl-[protein] + CoA + H(+). The enzyme catalyses N-terminal L-methionyl-L-isoleucyl-[protein] + acetyl-CoA = N-terminal N(alpha)-acetyl-L-methionyl-L-isoleucyl-[protein] + CoA + H(+). The catalysed reaction is N-terminal L-methionyl-L-phenylalanyl-[protein] + acetyl-CoA = N-terminal N(alpha)-acetyl-L-methionyl-L-phenylalanyl-[protein] + CoA + H(+). It carries out the reaction N-terminal L-methionyl-L-tryptophyl-[protein] + acetyl-CoA = N-terminal N(alpha)-acetyl-L-methionyl-L-tryptophyl-[protein] + CoA + H(+). It catalyses the reaction N-terminal L-methionyl-L-tyrosyl-[protein] + acetyl-CoA = N-terminal N(alpha)-acetyl-L-methionyl-L-tyrosyl-[protein] + CoA + H(+). Its function is as follows. Catalytic subunit of the N-terminal acetyltransferase C (NatC) complex. Catalyzes acetylation of the N-terminal methionine residues of peptides beginning with Met-Leu-Ala and Met-Leu-Gly. N-terminal acetylation protects proteins from ubiquitination and degradation by the N-end rule pathway. This chain is N-alpha-acetyltransferase 30 (naa30), found in Xenopus laevis (African clawed frog).